A 445-amino-acid chain; its full sequence is MQTPNNNGSTDSVLPPTSAGTTPPPPLQQSTPPPQQQQQQQWQQQQQWMAAMQQYPAAAMAMMQQQQMMMYPHPQYAPYNQAAYQQHPQFQYAAYQQQQQQHHQSQQQPRGGSGGDDVKTLWVGDLLHWMDETYLHTCFSHTNEVSSVKVIRNKQTCQSEGYGFVEFLSRSAAEEALQSFSGVTMPNAEQPFRLNWASFSTGEKRASENGPDLSIFVGDLAPDVSDAVLLETFAGRYPSVKGAKVVIDSNTGRSKGYGFVRFGDENERSRAMTEMNGAFCSSRQMRVGIATPKRAAAYGQQNGSQALTLAGGHGGNGSMSDGESNNSTIFVGGLDADVTEEDLMQPFSDFGEVVSVKIPVGKGCGFVQFANRQSAEEAIGNLNGTVIGKNTVRLSWGRSPNKQWRSDSGNQWNGGYSRGQGYNNGYANQDSNMYATAAAAVPGAS.

Residues 1-12 (MQTPNNNGSTDS) are compositionally biased toward polar residues. Disordered stretches follow at residues 1-45 (MQTP…WQQQ) and 93-117 (AAYQ…GGDD). Residues 22–35 (TPPPPLQQSTPPPQ) are compositionally biased toward pro residues. Composition is skewed to low complexity over residues 36–45 (QQQQQQWQQQ) and 93–108 (AAYQ…SQQQ). RRM domains lie at 119–199 (KTLW…WASF), 213–292 (LSIF…IATP), and 327–399 (STIF…WGRS).

This sequence belongs to the polyadenylate-binding RBP47 family. In terms of assembly, interacts with the poly(A) tail of mRNA in nucleus. As to expression, expressed in leaves, stems, flowers, and seedlings.

It localises to the nucleus. The protein resides in the cytoplasmic granule. Functionally, heterogeneous nuclear ribonucleoprotein (hnRNP)-protein binding the poly(A) tail of mRNA and probably involved in some steps of pre-mRNA maturation. This is Polyadenylate-binding protein RBP47A (RBP47A) from Arabidopsis thaliana (Mouse-ear cress).